The chain runs to 384 residues: Inactive lipoate--protein ligase 2 (384 aa).

Positions 79–303 constitute a BPL/LPL catalytic domain; it reads NESKGNECIF…HIKHIINYKN (225 aa).

The protein localises to the mitochondrion. The protein resides in the plastid. It is found in the apicoplast. Functionally, in the mitochondrion and together with LipL1, involved in the lipoylation of the E2 component of the branched chain alpha-ketoacid dehydrogenase complex BCKDH-E2/BCDH and the E2 component of the alpha -ketoglutarate dehydrogenase complex KDH. LipL1 is responsible for catalysing the activation of lipoate, forming lipoyl-AMP while LipL2 is required but is not capable of catalyzing this reaction. Although its role is unclear, it may catalyze the transfer of lipoyl groups from lipoyl-AMP to BCDH and KDH or act as an effector protein. The sequence is that of Inactive lipoate--protein ligase 2 from Plasmodium falciparum (isolate 3D7).